Consider the following 86-residue polypeptide: Latartoxin-1b (86 aa).

An N-terminal signal peptide occupies residues 1-19 (MKILVLAVVCTVLLQVALS). Positions 20 to 26 (ADSEEVR) are cleaved as a propeptide — removed in mature form. The short motif at 23 to 26 (EEVR) is the Processing quadruplet motif element. Intrachain disulfides connect cysteine 28-cysteine 43, cysteine 35-cysteine 48, cysteine 42-cysteine 65, and cysteine 50-cysteine 63.

This sequence belongs to the neurotoxin 19 (CSTX) family. Post-translationally, contains 4 disulfide bonds. Cleavage of the propeptide depends on the processing quadruplet motif (XXXR, with at least one of X being E). Expressed by the venom gland.

It localises to the secreted. In terms of biological role, insect toxin. The polypeptide is Latartoxin-1b (Lachesana tarabaevi (Spider)).